We begin with the raw amino-acid sequence, 844 residues long: Fe(2+) transport protein A/Fe(2+) transporter FeoB fusion protein (844 aa).

Residues Met-1–Leu-73 are feoA. Positions Ile-74–Phe-844 are feoB. Residues Thr-79–Glu-106 are compositionally biased toward polar residues. The interval Thr-79–Ala-110 is disordered. The FeoB-type G domain maps to Val-126 to Gly-289. Residues Gly-133–Thr-140, Gly-158–Glu-162, Asp-179–Gly-182, Asn-240–Asp-243, and Val-269–Arg-271 contribute to the GTP site. 8 consecutive transmembrane segments (helical) span residues Val-418 to Leu-438, Ile-475 to Ile-495, Leu-520 to Met-540, Pro-559 to Pro-579, Ser-581 to Ala-601, Met-646 to Tyr-666, Ile-786 to Val-806, and Trp-817 to Tyr-837.

In the N-terminal section; belongs to the FeoA family. This sequence in the C-terminal section; belongs to the TRAFAC class TrmE-Era-EngA-EngB-Septin-like GTPase superfamily. FeoB GTPase (TC 9.A.8) family.

Its subcellular location is the cell inner membrane. Probable transporter of a GTP-driven Fe(2+) uptake system. The chain is Fe(2+) transport protein A/Fe(2+) transporter FeoB fusion protein from Porphyromonas gingivalis (strain ATCC BAA-308 / W83).